We begin with the raw amino-acid sequence, 217 residues long: Deoxyribose-phosphate aldolase (217 aa).

Aspartate 95 functions as the Proton donor/acceptor in the catalytic mechanism. Lysine 156 functions as the Schiff-base intermediate with acetaldehyde in the catalytic mechanism. Residue lysine 184 is the Proton donor/acceptor of the active site.

It belongs to the DeoC/FbaB aldolase family. DeoC type 1 subfamily.

Its subcellular location is the cytoplasm. It carries out the reaction 2-deoxy-D-ribose 5-phosphate = D-glyceraldehyde 3-phosphate + acetaldehyde. It participates in carbohydrate degradation; 2-deoxy-D-ribose 1-phosphate degradation; D-glyceraldehyde 3-phosphate and acetaldehyde from 2-deoxy-alpha-D-ribose 1-phosphate: step 2/2. Catalyzes a reversible aldol reaction between acetaldehyde and D-glyceraldehyde 3-phosphate to generate 2-deoxy-D-ribose 5-phosphate. The protein is Deoxyribose-phosphate aldolase of Thermosynechococcus vestitus (strain NIES-2133 / IAM M-273 / BP-1).